The sequence spans 152 residues: Deoxyuridine 5'-triphosphate nucleotidohydrolase (152 aa).

Substrate contacts are provided by residues 71 to 73 (RSG), Asn84, 88 to 90 (LID), and Met98.

It belongs to the dUTPase family. Mg(2+) serves as cofactor.

The enzyme catalyses dUTP + H2O = dUMP + diphosphate + H(+). It functions in the pathway pyrimidine metabolism; dUMP biosynthesis; dUMP from dCTP (dUTP route): step 2/2. Its function is as follows. This enzyme is involved in nucleotide metabolism: it produces dUMP, the immediate precursor of thymidine nucleotides and it decreases the intracellular concentration of dUTP so that uracil cannot be incorporated into DNA. In Shewanella pealeana (strain ATCC 700345 / ANG-SQ1), this protein is Deoxyuridine 5'-triphosphate nucleotidohydrolase.